The chain runs to 317 residues: Acetyl-coenzyme A carboxylase carboxyl transferase subunit alpha (317 aa).

Residues 39 to 293 form the CoA carboxyltransferase C-terminal domain; the sequence is RLESRVNDAM…GDVIAKALAD (255 aa).

This sequence belongs to the AccA family. In terms of assembly, acetyl-CoA carboxylase is a heterohexamer composed of biotin carboxyl carrier protein (AccB), biotin carboxylase (AccC) and two subunits each of ACCase subunit alpha (AccA) and ACCase subunit beta (AccD).

It is found in the cytoplasm. It catalyses the reaction N(6)-carboxybiotinyl-L-lysyl-[protein] + acetyl-CoA = N(6)-biotinyl-L-lysyl-[protein] + malonyl-CoA. The protein operates within lipid metabolism; malonyl-CoA biosynthesis; malonyl-CoA from acetyl-CoA: step 1/1. Component of the acetyl coenzyme A carboxylase (ACC) complex. First, biotin carboxylase catalyzes the carboxylation of biotin on its carrier protein (BCCP) and then the CO(2) group is transferred by the carboxyltransferase to acetyl-CoA to form malonyl-CoA. The polypeptide is Acetyl-coenzyme A carboxylase carboxyl transferase subunit alpha (Agrobacterium fabrum (strain C58 / ATCC 33970) (Agrobacterium tumefaciens (strain C58))).